Here is a 161-residue protein sequence, read N- to C-terminus: Small ribosomal subunit protein uS9 (161 aa).

Belongs to the universal ribosomal protein uS9 family.

This Bartonella bacilliformis (strain ATCC 35685 / KC583 / Herrer 020/F12,63) protein is Small ribosomal subunit protein uS9.